The following is a 156-amino-acid chain: Small ribosomal subunit protein uS7c (156 aa).

Belongs to the universal ribosomal protein uS7 family. As to quaternary structure, part of the 30S ribosomal subunit.

Its subcellular location is the plastid. The protein localises to the cyanelle. In terms of biological role, one of the primary rRNA binding proteins, it binds directly to 16S rRNA where it nucleates assembly of the head domain of the 30S subunit. The protein is Small ribosomal subunit protein uS7c (rps7) of Cyanophora paradoxa.